Reading from the N-terminus, the 158-residue chain is SsrA-binding protein (158 aa).

The segment at 135–158 (DKRKTLKDRDWERDKQRGFKKDLD) is disordered. The span at 141–158 (KDRDWERDKQRGFKKDLD) shows a compositional bias: basic and acidic residues.

The protein belongs to the SmpB family.

Its subcellular location is the cytoplasm. Required for rescue of stalled ribosomes mediated by trans-translation. Binds to transfer-messenger RNA (tmRNA), required for stable association of tmRNA with ribosomes. tmRNA and SmpB together mimic tRNA shape, replacing the anticodon stem-loop with SmpB. tmRNA is encoded by the ssrA gene; the 2 termini fold to resemble tRNA(Ala) and it encodes a 'tag peptide', a short internal open reading frame. During trans-translation Ala-aminoacylated tmRNA acts like a tRNA, entering the A-site of stalled ribosomes, displacing the stalled mRNA. The ribosome then switches to translate the ORF on the tmRNA; the nascent peptide is terminated with the 'tag peptide' encoded by the tmRNA and targeted for degradation. The ribosome is freed to recommence translation, which seems to be the essential function of trans-translation. The sequence is that of SsrA-binding protein from Psychrobacter cryohalolentis (strain ATCC BAA-1226 / DSM 17306 / VKM B-2378 / K5).